We begin with the raw amino-acid sequence, 351 residues long: E3 ubiquitin-protein ligase TRIM63 (351 aa).

The RING-type zinc finger occupies 23–79 (CPICLEMFTKPVVILPCQHNLCRKCANDIFQAANPYWTNRGGSVSMSGGRFRCPSCR). Positions 74–218 (RCPSCRHEVI…LSHKFDALYA (145 aa)) are interaction with TTN. Residues 117-159 (GSHPMCKEHEDEKINIYCLTCEVPTCSLCKVFGAHQACEVAPL) form a B box-type zinc finger. Residues Cys122, His125, Cys145, and His151 each contribute to the Zn(2+) site. Positions 189–269 (SQLEDSCRVT…VETAIQSLDE (81 aa)) form a coiled coil. The COS domain maps to 267 to 325 (LDEPGGATFLLSAKPLIKSIVEASKGCQLGKTEQGFENMDYFTLNLEHIAEALRAIDFG). Acidic residues predominate over residues 326–345 (TDEEEEFTEEEEEEDQEEGV). The interval 326 to 351 (TDEEEEFTEEEEEEDQEEGVSTEGHQ) is disordered.

In terms of assembly, homodimer. Homooligomer and heterooligomer. Interacts with SUMO2, titin/TTN and GMEB1. Interacts with TRIM54 and probably with TRIM55 and TNNI3. Forms a ternary complex with RACK1 and PRKCE. Interacts with CKM. Muscle specific. Selectively expressed in heart and skeletal muscle.

The protein resides in the cytoplasm. The protein localises to the nucleus. Its subcellular location is the myofibril. It is found in the sarcomere. It localises to the m line. The protein resides in the z line. The enzyme catalyses S-ubiquitinyl-[E2 ubiquitin-conjugating enzyme]-L-cysteine + [acceptor protein]-L-lysine = [E2 ubiquitin-conjugating enzyme]-L-cysteine + N(6)-ubiquitinyl-[acceptor protein]-L-lysine.. It functions in the pathway protein modification; protein ubiquitination. Its function is as follows. E3 ubiquitin ligase. Mediates the ubiquitination and subsequent proteasomal degradation of CKM, GMEB1 and HIBADH. Regulates the proteasomal degradation of muscle proteins under amino acid starvation, where muscle protein is catabolized to provide other organs with amino acids. Inhibits de novo skeletal muscle protein synthesis under amino acid starvation. Regulates proteasomal degradation of cardiac troponin I/TNNI3 and probably of other sarcomeric-associated proteins. May play a role in striated muscle atrophy and hypertrophy by regulating an anti-hypertrophic PKC-mediated signaling pathway. May regulate the organization of myofibrils through TTN in muscle cells. The sequence is that of E3 ubiquitin-protein ligase TRIM63 (Trim63) from Rattus norvegicus (Rat).